The primary structure comprises 184 residues: ATP synthase subunit delta (184 aa).

It belongs to the ATPase delta chain family. In terms of assembly, F-type ATPases have 2 components, F(1) - the catalytic core - and F(0) - the membrane proton channel. F(1) has five subunits: alpha(3), beta(3), gamma(1), delta(1), epsilon(1). F(0) has three main subunits: a(1), b(2) and c(10-14). The alpha and beta chains form an alternating ring which encloses part of the gamma chain. F(1) is attached to F(0) by a central stalk formed by the gamma and epsilon chains, while a peripheral stalk is formed by the delta and b chains.

The protein resides in the cell inner membrane. Its function is as follows. F(1)F(0) ATP synthase produces ATP from ADP in the presence of a proton or sodium gradient. F-type ATPases consist of two structural domains, F(1) containing the extramembraneous catalytic core and F(0) containing the membrane proton channel, linked together by a central stalk and a peripheral stalk. During catalysis, ATP synthesis in the catalytic domain of F(1) is coupled via a rotary mechanism of the central stalk subunits to proton translocation. This protein is part of the stalk that links CF(0) to CF(1). It either transmits conformational changes from CF(0) to CF(1) or is implicated in proton conduction. The protein is ATP synthase subunit delta of Rickettsia conorii (strain ATCC VR-613 / Malish 7).